The primary structure comprises 366 residues: Fructose-bisphosphate aldolase 1 (366 aa).

Substrate contacts are provided by Arg-56 and Lys-147. Glu-189 serves as the catalytic Proton acceptor. Lys-231 serves as the catalytic Schiff-base intermediate with dihydroxyacetone-P.

This sequence belongs to the class I fructose-bisphosphate aldolase family. As to expression, ubiquitous.

The enzyme catalyses beta-D-fructose 1,6-bisphosphate = D-glyceraldehyde 3-phosphate + dihydroxyacetone phosphate. Its pathway is carbohydrate degradation; glycolysis; D-glyceraldehyde 3-phosphate and glycerone phosphate from D-glucose: step 4/4. Functionally, may be involved in the metabolism of fructose-bisphosphate (beta-D-fructose 1,6-bisphosphate) and of fructose 1-phosphate. This Caenorhabditis elegans protein is Fructose-bisphosphate aldolase 1 (aldo-1).